A 41-amino-acid polypeptide reads, in one-letter code: Large ribosomal subunit protein bL36 (41 aa).

The protein belongs to the bacterial ribosomal protein bL36 family.

This chain is Large ribosomal subunit protein bL36, found in Bradyrhizobium diazoefficiens (strain JCM 10833 / BCRC 13528 / IAM 13628 / NBRC 14792 / USDA 110).